We begin with the raw amino-acid sequence, 689 residues long: Elongation factor G (689 aa).

Positions 9–283 (AKFRNIGIMA…AIIEFMPSPL (275 aa)) constitute a tr-type G domain. Residues 18-25 (AHIDAGKT), 82-86 (DTPGH), and 136-139 (NKMD) each bind GTP.

This sequence belongs to the TRAFAC class translation factor GTPase superfamily. Classic translation factor GTPase family. EF-G/EF-2 subfamily.

It is found in the cytoplasm. Catalyzes the GTP-dependent ribosomal translocation step during translation elongation. During this step, the ribosome changes from the pre-translocational (PRE) to the post-translocational (POST) state as the newly formed A-site-bound peptidyl-tRNA and P-site-bound deacylated tRNA move to the P and E sites, respectively. Catalyzes the coordinated movement of the two tRNA molecules, the mRNA and conformational changes in the ribosome. The protein is Elongation factor G of Clostridium botulinum (strain Okra / Type B1).